Consider the following 231-residue polypeptide: 2-phospho-L-lactate guanylyltransferase (231 aa).

It belongs to the CofC family. As to quaternary structure, homodimer.

The catalysed reaction is (2S)-2-phospholactate + GTP + H(+) = (2S)-lactyl-2-diphospho-5'-guanosine + diphosphate. The protein operates within cofactor biosynthesis; coenzyme F420 biosynthesis. In terms of biological role, guanylyltransferase that catalyzes the activation of (2S)-2-phospholactate (2-PL) as (2S)-lactyl-2-diphospho-5'-guanosine, via the condensation of 2-PL with GTP. It is involved in the biosynthesis of coenzyme F420, a hydride carrier cofactor. The protein is 2-phospho-L-lactate guanylyltransferase of Haloterrigena turkmenica (strain ATCC 51198 / DSM 5511 / JCM 9101 / NCIMB 13204 / VKM B-1734 / 4k) (Halococcus turkmenicus).